The following is a 407-amino-acid chain: MTVTNTYNPTLFFTRVVFQRITKFTAKANEENEILFYALFVADLCLDMKGGLIAINKPSGRTSAQCLNELKKIISNSELAQYFRPAPPHPNDRNRRRRKSNRLPDIKIGHGGTLDPLASGVLVVGLGTGTKQLSSLLSCMKTYRATALFGCSTDTYDSAGKIIKIAVHIPTKEEILSGLDAFRGDISQLPPLYSALHIQGKRLYEYAREGIPLPESIKARSMHCEELILKDFIPKEEHTYTDPDEFASKEAIESEELLRPIEGGAERHDLLAKTEQDINPQDGDEKINAKSPTTNSVTDVAKDQTVTNPKKRKFEVTDLARGSRPAIGPIAVLDMTVSSGFYVRSLIHDLGRQVNSEAHMVDLVRLKQGSFALDDENCFDFSEFSAPGWEEKLAAAFKIDLKGDETS.

The tract at residues 83–105 (FRPAPPHPNDRNRRRRKSNRLPD) is disordered. The active-site Nucleophile is the aspartate 115. Residues 274–298 (TEQDINPQDGDEKINAKSPTTNSVT) form a disordered region. Serine 291 carries the post-translational modification Phosphoserine. Position 293 is a phosphothreonine (threonine 293). Serine 296 carries the phosphoserine modification. Position 406 is a phosphothreonine (threonine 406).

The protein belongs to the pseudouridine synthase TruB family.

It localises to the nucleus. Its subcellular location is the mitochondrion. It carries out the reaction uridine(55) in tRNA = pseudouridine(55) in tRNA. The catalysed reaction is a uridine in mRNA = a pseudouridine in mRNA. In terms of biological role, responsible for synthesis of pseudouridine from uracil-55 in the psi GC loop of transfer RNAs. Also catalyzes pseudouridylation of mRNAs with the consensus sequence 5'-GGUUCRA-3'. This chain is tRNA pseudouridine synthase 4, found in Schizosaccharomyces pombe (strain 972 / ATCC 24843) (Fission yeast).